A 206-amino-acid polypeptide reads, in one-letter code: Ras-related protein Rab-14 (206 aa).

Residue 15–22 (GDMGVGKS) coordinates GTP. Residues 37–45 (SPHTIGVEF) carry the Effector region motif. Residues 63 to 67 (DTAGQ) and 121 to 124 (NKKD) contribute to the GTP site. The interval 182–206 (PDGGITKNPPQTITDKPQDASKCSC) is disordered. Polar residues predominate over residues 189–206 (NPPQTITDKPQDASKCSC). 2 S-geranylgeranyl cysteine lipidation sites follow: Cys204 and Cys206. The residue at position 206 (Cys206) is a Cysteine methyl ester.

Belongs to the small GTPase superfamily. Rab family.

The protein resides in the endosome. The protein localises to the contractile vacuole. It localises to the membrane. The catalysed reaction is GTP + H2O = GDP + phosphate + H(+). Its activity is regulated as follows. Rab activation is generally mediated by a guanine exchange factor (GEF), while inactivation through hydrolysis of bound GTP is catalyzed by a GTPase activating protein (GAP). That Rab is activated by the DENND6A and DENND6B guanine exchange factors (GEF). In terms of biological role, the small GTPases Rab are key regulators of intracellular membrane trafficking, from the formation of transport vesicles to their fusion with membranes. Rabs cycle between an inactive GDP-bound form and an active GTP-bound form that is able to recruit to membranes different set of downstream effectors directly responsible for vesicle formation, movement, tethering and fusion. Regulates the fusion of phagosomes and lysosomes. The protein is Ras-related protein Rab-14 (rab14) of Dictyostelium discoideum (Social amoeba).